A 390-amino-acid chain; its full sequence is MSFFGSEVARPRLFFRGLLGQAGPILITGGRAVADYREAFVGIDVAKLKNAIAVAESGRNGEVRYWGEVEASDAGIRRAIKQITAKFEHVYFCYEAGPTGYGLYRLIRSLGHECIVVAPSLIPRKPGDRVKTNRRDAISLARLLRAGELTAVWVPDEDHEAMRDLVRARTSAVETLRTHRQQVNAFMLKHGRIYPGKRSWTMRYLRWLQEQHFDHPAHQIALQEMVETVIAEFVPHWSLAAVVCALRALRGVDLIAAVTFATEVGDAGRFESPRQLMGYLGLVPGERSTGETTKRIGITKAGNSRVRTLLVECAWTYRYPPRIGKRKLYRLEEVSSSVREIAWKAQTRLTARYRMLSARGKKSTVVCTAVARELAGFMWAIAREARQTTS.

The protein belongs to the transposase IS1111A/IS1328/IS1533 family.

The sequence is that of Putative transposase y4qE from Sinorhizobium fredii (strain NBRC 101917 / NGR234).